Here is a 117-residue protein sequence, read N- to C-terminus: Large ribosomal subunit protein bL20 (117 aa).

This sequence belongs to the bacterial ribosomal protein bL20 family.

Its function is as follows. Binds directly to 23S ribosomal RNA and is necessary for the in vitro assembly process of the 50S ribosomal subunit. It is not involved in the protein synthesizing functions of that subunit. The protein is Large ribosomal subunit protein bL20 of Solidesulfovibrio magneticus (strain ATCC 700980 / DSM 13731 / RS-1) (Desulfovibrio magneticus).